We begin with the raw amino-acid sequence, 434 residues long: Methylenetetrahydrofolate--tRNA-(uracil-5-)-methyltransferase TrmFO (434 aa).

9–14 lines the FAD pocket; the sequence is GAGLAG.

It belongs to the MnmG family. TrmFO subfamily. Requires FAD as cofactor.

Its subcellular location is the cytoplasm. The catalysed reaction is uridine(54) in tRNA + (6R)-5,10-methylene-5,6,7,8-tetrahydrofolate + NADH + H(+) = 5-methyluridine(54) in tRNA + (6S)-5,6,7,8-tetrahydrofolate + NAD(+). It catalyses the reaction uridine(54) in tRNA + (6R)-5,10-methylene-5,6,7,8-tetrahydrofolate + NADPH + H(+) = 5-methyluridine(54) in tRNA + (6S)-5,6,7,8-tetrahydrofolate + NADP(+). Its function is as follows. Catalyzes the folate-dependent formation of 5-methyl-uridine at position 54 (M-5-U54) in all tRNAs. The polypeptide is Methylenetetrahydrofolate--tRNA-(uracil-5-)-methyltransferase TrmFO (Fusobacterium nucleatum subsp. nucleatum (strain ATCC 25586 / DSM 15643 / BCRC 10681 / CIP 101130 / JCM 8532 / KCTC 2640 / LMG 13131 / VPI 4355)).